The primary structure comprises 395 residues: Succinyl-diaminopimelate desuccinylase (395 aa).

Histidine 74 lines the Zn(2+) pocket. Residue aspartate 76 is part of the active site. Zn(2+) is bound at residue aspartate 107. The Proton acceptor role is filled by glutamate 141. The Zn(2+) site is built by glutamate 142, glutamate 170, and histidine 368.

This sequence belongs to the peptidase M20A family. DapE subfamily. Homodimer. Zn(2+) is required as a cofactor. It depends on Co(2+) as a cofactor.

It catalyses the reaction N-succinyl-(2S,6S)-2,6-diaminopimelate + H2O = (2S,6S)-2,6-diaminopimelate + succinate. It functions in the pathway amino-acid biosynthesis; L-lysine biosynthesis via DAP pathway; LL-2,6-diaminopimelate from (S)-tetrahydrodipicolinate (succinylase route): step 3/3. Its function is as follows. Catalyzes the hydrolysis of N-succinyl-L,L-diaminopimelic acid (SDAP), forming succinate and LL-2,6-diaminopimelate (DAP), an intermediate involved in the bacterial biosynthesis of lysine and meso-diaminopimelic acid, an essential component of bacterial cell walls. In Brucella anthropi (strain ATCC 49188 / DSM 6882 / CCUG 24695 / JCM 21032 / LMG 3331 / NBRC 15819 / NCTC 12168 / Alc 37) (Ochrobactrum anthropi), this protein is Succinyl-diaminopimelate desuccinylase.